We begin with the raw amino-acid sequence, 310 residues long: GPN-loop GTPase 2 (310 aa).

Alanine 2 bears the N-acetylalanine mark. 19-24 (GSGKTT) serves as a coordination point for GTP. The Gly-Pro-Asn (GPN)-loop; involved in dimer interface motif lies at 76–78 (GPN). 178 to 181 (SKMD) provides a ligand contact to GTP.

Belongs to the GPN-loop GTPase family. As to quaternary structure, heterodimers with GPN1 or GPN3. Binds to RNA polymerase II (RNAPII).

Its function is as follows. Small GTPase required for proper localization of RNA polymerase II and III (RNAPII and RNAPIII). May act at an RNAP assembly step prior to nuclear import. This chain is GPN-loop GTPase 2, found in Homo sapiens (Human).